The sequence spans 556 residues: Glutamine--tRNA ligase (556 aa).

The 'HIGH' region signature appears at 34-44 (PEPNGYLHIGH). Residues 35–37 (EPN) and 41–47 (HIGHAKS) each bind ATP. Residues Asp67 and Tyr212 each contribute to the L-glutamine site. ATP-binding positions include Thr231, 263 to 264 (RL), and 271 to 273 (MSK). Residues 270 to 274 (VMSKR) carry the 'KMSKS' region motif.

Belongs to the class-I aminoacyl-tRNA synthetase family. Monomer.

The protein resides in the cytoplasm. It carries out the reaction tRNA(Gln) + L-glutamine + ATP = L-glutaminyl-tRNA(Gln) + AMP + diphosphate. In Nitrosomonas europaea (strain ATCC 19718 / CIP 103999 / KCTC 2705 / NBRC 14298), this protein is Glutamine--tRNA ligase.